Consider the following 416-residue polypeptide: MNAEIIAVGSELLLGQIANTNAQFLSEKLAELGINVYFHTVVGDNAGRLEQAVRVAQARAELIIFTGGLGPTKDDLTKETIARLLGRELVIDEEALRSIEAYFARTNRTMTENNKKQALVLQGSTILKNEHGMAPGMAITLNSITYMLLPGPPKEMQPMFLKYGRPFLMEQLGRHERIESRVLRFFGIGESQLETDIEDLIDQQSNPTIAPLAGDGEVALRLTAKHHSEIEAKKLLDKAEQAILERVGRYFYGYNDETLFKKTVKMLKEKKKTIAAAESLTGGLFLTELTAIPGASQVVRGGVVCYANEVKEKVLHVPASVLTTDGAVSERCAQLLAENVRTLCHADIGISFTGVAGPDPLEGKPVGTVYIGISTPENETEVYALALPGQRDAIRIRTAKYGCSIILKKLAAAYEG.

This sequence belongs to the CinA family.

This Geobacillus sp. (strain WCH70) protein is Putative competence-damage inducible protein.